The primary structure comprises 78 residues: Large ribosomal subunit protein bL28 (78 aa).

It belongs to the bacterial ribosomal protein bL28 family.

The sequence is that of Large ribosomal subunit protein bL28 from Psychrobacter arcticus (strain DSM 17307 / VKM B-2377 / 273-4).